The sequence spans 208 residues: ATP-dependent Clp protease proteolytic subunit (208 aa).

The active-site Nucleophile is the Ser106. Residue His131 is part of the active site.

It belongs to the peptidase S14 family. As to quaternary structure, fourteen ClpP subunits assemble into 2 heptameric rings which stack back to back to give a disk-like structure with a central cavity, resembling the structure of eukaryotic proteasomes.

It is found in the cytoplasm. It catalyses the reaction Hydrolysis of proteins to small peptides in the presence of ATP and magnesium. alpha-casein is the usual test substrate. In the absence of ATP, only oligopeptides shorter than five residues are hydrolyzed (such as succinyl-Leu-Tyr-|-NHMec, and Leu-Tyr-Leu-|-Tyr-Trp, in which cleavage of the -Tyr-|-Leu- and -Tyr-|-Trp bonds also occurs).. Cleaves peptides in various proteins in a process that requires ATP hydrolysis. Has a chymotrypsin-like activity. Plays a major role in the degradation of misfolded proteins. The polypeptide is ATP-dependent Clp protease proteolytic subunit (Dinoroseobacter shibae (strain DSM 16493 / NCIMB 14021 / DFL 12)).